The sequence spans 59 residues: U-actitoxin-Aer2a (59 aa).

Contains 5 disulfide bonds.

Its subcellular location is the secreted. It is found in the nematocyst. The polypeptide is U-actitoxin-Aer2a (Anemonia erythraea (Sea anemone)).